The chain runs to 946 residues: Protein translocase subunit SecA (946 aa).

Residues Gln87, 105-109 (GEGKT), and Asp524 each bind ATP. 2 disordered regions span residues 872–892 (PEQP…NTGE) and 904–946 (PADT…GRYA). Over residues 907–917 (TVEKSERDPNR) the composition is skewed to basic and acidic residues. Zn(2+) is bound by residues Cys930, Cys932, Cys941, and His942. Residues 936-946 (KKYKHCHGRYA) show a composition bias toward basic residues.

This sequence belongs to the SecA family. Monomer and homodimer. Part of the essential Sec protein translocation apparatus which comprises SecA, SecYEG and auxiliary proteins SecDF-YajC and YidC. Zn(2+) is required as a cofactor.

Its subcellular location is the cell inner membrane. The protein localises to the cytoplasm. It carries out the reaction ATP + H2O + cellular proteinSide 1 = ADP + phosphate + cellular proteinSide 2.. Functionally, part of the Sec protein translocase complex. Interacts with the SecYEG preprotein conducting channel. Has a central role in coupling the hydrolysis of ATP to the transfer of proteins into and across the cell membrane, serving both as a receptor for the preprotein-SecB complex and as an ATP-driven molecular motor driving the stepwise translocation of polypeptide chains across the membrane. The sequence is that of Protein translocase subunit SecA from Rhodopseudomonas palustris (strain BisB5).